A 359-amino-acid chain; its full sequence is Heme A synthase (359 aa).

The next 5 membrane-spanning stretches (helical) occupy residues 8–28 (IMSIWLIVSTLLLLLMIVVGG), 94–114 (LLGRITGIIIIIPFLIFCYLK), 124–144 (LLLITCLVVIQGFMGWYMVKS), 159–179 (GHLLLAVIIYHQLIAELLIII), and 215–235 (IIIFLLYTQIMFGALVAGLDA). Residue His274 participates in heme binding. 3 helical membrane passes run 276–296 (WFGILISGLIICYAIWLIILN), 303–323 (MGMVAACLVLVQVTTGIITLL), and 328–348 (ILAALTHQVGAILILTTFLFI). Residue His334 participates in heme binding.

It belongs to the COX15/CtaA family. Type 2 subfamily. As to quaternary structure, interacts with CtaB. Heme b is required as a cofactor.

It is found in the cell membrane. The enzyme catalyses Fe(II)-heme o + 2 A + H2O = Fe(II)-heme a + 2 AH2. It participates in porphyrin-containing compound metabolism; heme A biosynthesis; heme A from heme O: step 1/1. Its function is as follows. Catalyzes the conversion of heme O to heme A by two successive hydroxylations of the methyl group at C8. The first hydroxylation forms heme I, the second hydroxylation results in an unstable dihydroxymethyl group, which spontaneously dehydrates, resulting in the formyl group of heme A. This Orientia tsutsugamushi (strain Boryong) (Rickettsia tsutsugamushi) protein is Heme A synthase.